A 410-amino-acid chain; its full sequence is uncharacterized protein (410 aa).

His87 is a Zn(2+) binding site. Residue Asp89 is part of the active site. Asp120 is a Zn(2+) binding site. Glu154 serves as the catalytic Proton acceptor. Glu155, Asp184, and His387 together coordinate Zn(2+).

This sequence belongs to the peptidase M20A family. The cofactor is Zn(2+). Requires Co(2+) as cofactor.

This is an uncharacterized protein from Methanocaldococcus jannaschii (strain ATCC 43067 / DSM 2661 / JAL-1 / JCM 10045 / NBRC 100440) (Methanococcus jannaschii).